Here is a 175-residue protein sequence, read N- to C-terminus: Adenine phosphoribosyltransferase (175 aa).

Belongs to the purine/pyrimidine phosphoribosyltransferase family. As to quaternary structure, homodimer.

The protein localises to the cytoplasm. It carries out the reaction AMP + diphosphate = 5-phospho-alpha-D-ribose 1-diphosphate + adenine. Its pathway is purine metabolism; AMP biosynthesis via salvage pathway; AMP from adenine: step 1/1. Catalyzes a salvage reaction resulting in the formation of AMP, that is energically less costly than de novo synthesis. In Parvibaculum lavamentivorans (strain DS-1 / DSM 13023 / NCIMB 13966), this protein is Adenine phosphoribosyltransferase.